Consider the following 112-residue polypeptide: UPF0060 membrane protein IL2332 (112 aa).

The next 4 membrane-spanning stretches (helical) occupy residues 10-30, 36-56, 64-84, and 90-110; these read LGLFFITAIAEIIGCYLPYLW, SAWLLIPAAISLAVFAWLLTL, VYAAYGGVYVVTALLWLKAVE, and TYDAVGAAFTLTGMAIIAVGW.

It belongs to the UPF0060 family.

The protein resides in the cell inner membrane. The polypeptide is UPF0060 membrane protein IL2332 (Idiomarina loihiensis (strain ATCC BAA-735 / DSM 15497 / L2-TR)).